We begin with the raw amino-acid sequence, 264 residues long: Undecaprenyl-diphosphatase (264 aa).

Transmembrane regions (helical) follow at residues 7–27 (IVLALIQGLSEFLPISSSAHL), 41–61 (LIFDVVVHMGTLSAVIFYYQA), 89–109 (VLLGTIPIGLVGMIFKDFVAV), 114–134 (IEIIAYTTLVFGLLLGFASWF), 144–164 (TISWIDVSFVSMMQILALIPG), 186–206 (IQFSFLLSIPVITLSLILMLI), 219–239 (LLVLGFVISTISAYATIIFVI), and 244–264 (MVGMTPFVIYRLILGVFLFFL).

This sequence belongs to the UppP family.

Its subcellular location is the cell inner membrane. The enzyme catalyses di-trans,octa-cis-undecaprenyl diphosphate + H2O = di-trans,octa-cis-undecaprenyl phosphate + phosphate + H(+). In terms of biological role, catalyzes the dephosphorylation of undecaprenyl diphosphate (UPP). Confers resistance to bacitracin. This is Undecaprenyl-diphosphatase from Vesicomyosocius okutanii subsp. Calyptogena okutanii (strain HA).